Consider the following 657-residue polypeptide: Pyoverdine export ATP-binding/permease protein PvdT (657 aa).

The ABC transporter domain maps to 6-245 (IDLRNIRKSY…LSANAGALQA (240 aa)). Residue 43–50 (GASGSGKS) coordinates ATP. Transmembrane regions (helical) follow at residues 285-305 (ALTLLGIIIGVASVVVMLAVG), 532-552 (LSLMLGAIAAISLLVGGIGVM), 590-610 (LSVVGGLAGIGVALIIGGILI), and 620-640 (LAAVLGAFACALVTGVIFGFM).

The protein belongs to the ABC transporter superfamily. Macrolide exporter (TC 3.A.1.122) family. Part of the tripartite efflux system PvdRT-OpmQ, which is composed of an inner membrane component with both ATPase and permease domains, PvdT, a periplasmic membrane fusion protein, PvdR, and an outer membrane component, OpmQ.

The protein localises to the cell inner membrane. In terms of biological role, part of the tripartite efflux system PvdRT-OpmQ required for the secretion into the extracellular milieu of the siderophore pyoverdine (PVD), which is involved in iron acquisition. This subunit binds PVD and drives its secretion by hydrolyzing ATP. The system is responsible for export of newly synthesized PVD after the final steps of biosynthesis have taken place in the periplasm. It is also responsible for recycling of PVD after internalization of ferri-PVD into the periplasm by the outer-membrane receptor FpvA and release of iron from PVD, thus making PVD available for new cycles of iron uptake. This chain is Pyoverdine export ATP-binding/permease protein PvdT, found in Pseudomonas fluorescens (strain ATCC BAA-477 / NRRL B-23932 / Pf-5).